Reading from the N-terminus, the 154-residue chain is SsrA-binding protein (154 aa).

Belongs to the SmpB family.

Its subcellular location is the cytoplasm. Functionally, required for rescue of stalled ribosomes mediated by trans-translation. Binds to transfer-messenger RNA (tmRNA), required for stable association of tmRNA with ribosomes. tmRNA and SmpB together mimic tRNA shape, replacing the anticodon stem-loop with SmpB. tmRNA is encoded by the ssrA gene; the 2 termini fold to resemble tRNA(Ala) and it encodes a 'tag peptide', a short internal open reading frame. During trans-translation Ala-aminoacylated tmRNA acts like a tRNA, entering the A-site of stalled ribosomes, displacing the stalled mRNA. The ribosome then switches to translate the ORF on the tmRNA; the nascent peptide is terminated with the 'tag peptide' encoded by the tmRNA and targeted for degradation. The ribosome is freed to recommence translation, which seems to be the essential function of trans-translation. This Synechococcus sp. (strain JA-3-3Ab) (Cyanobacteria bacterium Yellowstone A-Prime) protein is SsrA-binding protein.